A 69-amino-acid polypeptide reads, in one-letter code: Snake venom metalloproteinase BnP2 (69 aa).

A Peptidase M12B domain is found at 1 to 69 (YIELAVVADH…EWRERDIIPR (69 aa)). Position 3 (Glu-3) interacts with Ca(2+).

Belongs to the venom metalloproteinase (M12B) family. P-I subfamily. Monomer. Zn(2+) is required as a cofactor. Expressed by the venom gland.

It localises to the secreted. Its activity is regulated as follows. Inhibited by EDTA. In terms of biological role, this protein is a zinc protease from snake venom that is devoid of significant myotoxic and hemorrhagic activities. It hydrolyzes the Aalpha-chain and more slowly the Bbeta-chain of fibrin and fibrinogen, without affecting the gamma-chains. It induces cell detachment and a apoptosis (anoikis) in endothelial cells. This chain is Snake venom metalloproteinase BnP2, found in Bothrops pauloensis (Neuwied's lancehead).